A 202-amino-acid polypeptide reads, in one-letter code: Oligoribonuclease (202 aa).

One can recognise an Exonuclease domain in the interval 2–166; that stretch reads LVWIDCEMTG…ADIQESIEEL (165 aa). Tyr123 is a catalytic residue.

This sequence belongs to the oligoribonuclease family.

It is found in the cytoplasm. Functionally, 3'-to-5' exoribonuclease specific for small oligoribonucleotides. In Cutibacterium acnes (strain DSM 16379 / KPA171202) (Propionibacterium acnes), this protein is Oligoribonuclease.